The following is a 282-amino-acid chain: Bifunctional protein FolD (282 aa).

Residues 166–168 and Ile232 contribute to the NADP(+) site; that span reads GAS.

It belongs to the tetrahydrofolate dehydrogenase/cyclohydrolase family. Homodimer.

The enzyme catalyses (6R)-5,10-methylene-5,6,7,8-tetrahydrofolate + NADP(+) = (6R)-5,10-methenyltetrahydrofolate + NADPH. It carries out the reaction (6R)-5,10-methenyltetrahydrofolate + H2O = (6R)-10-formyltetrahydrofolate + H(+). The protein operates within one-carbon metabolism; tetrahydrofolate interconversion. Catalyzes the oxidation of 5,10-methylenetetrahydrofolate to 5,10-methenyltetrahydrofolate and then the hydrolysis of 5,10-methenyltetrahydrofolate to 10-formyltetrahydrofolate. The protein is Bifunctional protein FolD of Histophilus somni (strain 129Pt) (Haemophilus somnus).